The chain runs to 151 residues: Coiled-coil-helix-coiled-coil-helix domain-containing protein 2 (151 aa).

2 disordered regions span residues 1-50 (MPRG…AAAP) and 77-111 (GHAI…AQQQ). Residues 10 to 26 (SRMAPPASRAPQMRAAP) are compositionally biased toward low complexity. Residues 27-38 (RPAPVAQPPAAA) are compositionally biased toward pro residues. Low complexity-rich tracts occupy residues 39 to 50 (PPSAVGSSAAAP) and 100 to 111 (QEPQGTQPAQQQ). Positions 111–151 (QQPCLYEIKQFLECAQNQGDIKLCEGFNEVLKQCRLANGLA) constitute a CHCH domain. 2 consecutive short sequence motifs (cx9C motif) follow at residues 114–124 (CLYEIKQFLEC) and 134–144 (CEGFNEVLKQC). Disulfide bonds link Cys114–Cys144 and Cys124–Cys134.

Interacts with RBPJ.

Its subcellular location is the nucleus. The protein localises to the mitochondrion. It localises to the mitochondrion intermembrane space. Its function is as follows. Transcription factor. Binds to the oxygen responsive element of COX4I2 and activates its transcription under hypoxia conditions (4% oxygen), as well as normoxia conditions (20% oxygen). The chain is Coiled-coil-helix-coiled-coil-helix domain-containing protein 2 (CHCHD2) from Homo sapiens (Human).